Reading from the N-terminus, the 143-residue chain is Nucleoside diphosphate kinase (143 aa).

ATP-binding residues include Lys11, Phe59, Arg87, Thr93, Arg104, and Asn114. His117 functions as the Pros-phosphohistidine intermediate in the catalytic mechanism.

This sequence belongs to the NDK family. In terms of assembly, homotetramer. Mg(2+) is required as a cofactor.

Its subcellular location is the cytoplasm. The catalysed reaction is a 2'-deoxyribonucleoside 5'-diphosphate + ATP = a 2'-deoxyribonucleoside 5'-triphosphate + ADP. It catalyses the reaction a ribonucleoside 5'-diphosphate + ATP = a ribonucleoside 5'-triphosphate + ADP. In terms of biological role, major role in the synthesis of nucleoside triphosphates other than ATP. The ATP gamma phosphate is transferred to the NDP beta phosphate via a ping-pong mechanism, using a phosphorylated active-site intermediate. In Shewanella piezotolerans (strain WP3 / JCM 13877), this protein is Nucleoside diphosphate kinase.